Reading from the N-terminus, the 670-residue chain is Protein angel homolog 1 (670 aa).

Residues serine 77 and serine 105 each carry the phosphoserine modification.

The protein belongs to the CCR4/nocturin family.

In Homo sapiens (Human), this protein is Protein angel homolog 1 (ANGEL1).